The chain runs to 166 residues: 3-hydroxyacyl-[acyl-carrier-protein] dehydratase FabZ (166 aa).

Residue H72 is part of the active site.

It belongs to the thioester dehydratase family. FabZ subfamily.

The protein localises to the cytoplasm. The catalysed reaction is a (3R)-hydroxyacyl-[ACP] = a (2E)-enoyl-[ACP] + H2O. Its function is as follows. Involved in unsaturated fatty acids biosynthesis. Catalyzes the dehydration of short chain beta-hydroxyacyl-ACPs and long chain saturated and unsaturated beta-hydroxyacyl-ACPs. This chain is 3-hydroxyacyl-[acyl-carrier-protein] dehydratase FabZ, found in Synechococcus sp. (strain JA-3-3Ab) (Cyanobacteria bacterium Yellowstone A-Prime).